We begin with the raw amino-acid sequence, 167 residues long: V-type proton ATPase subunit c' (167 aa).

Residues 1–13 (MAEIMADSELAPK) lie on the Lumenal side of the membrane. A helical transmembrane segment spans residues 14-34 (FAPFIGMAGIAAAMIFGSAGA). Residues 35-59 (AYGTAKSGIGIAGVGTFRPDLIMKC) are Cytoplasmic-facing. The chain crosses the membrane as a helical span at residues 60–80 (LIPVVMSGIIAVYALVVAVLI). Over 81-101 (AQDLGPPGSGQHYSLFNGFMH) the chain is Lumenal. Residues 102 to 122 (LACGLSVGLTGLAAGYCIGIV) traverse the membrane as a helical segment. At 123-140 (GDKGVRSFMLQSRIFVGM) the chain is on the cytoplasmic side. Residues 141-161 (VLILIFGEVLGLYGLIVALIL) form a helical membrane-spanning segment. Residues 162–167 (NTKSKG) lie on the Lumenal side of the membrane.

Belongs to the V-ATPase proteolipid subunit family. As to quaternary structure, V-ATPase is a heteromultimeric enzyme composed of a peripheral catalytic V1 complex (components A to H) attached to an integral membrane V0 proton pore complex (components: a, c, c', c'', d, e, f and VOA1). The decameric c-ring forms the proton-conducting pore, and is composed of eight proteolipid subunits c, one subunit c' and one subunit c''.

It is found in the vacuole membrane. In terms of biological role, proton-conducting pore forming subunit of the V0 complex of vacuolar(H+)-ATPase (V-ATPase), a multisubunit enzyme composed of a peripheral complex (V1) that hydrolyzes ATP and a membrane integral complex (V0) that translocates protons. V-ATPase is responsible for acidifying and maintaining the pH of intracellular compartments. The sequence is that of V-type proton ATPase subunit c' (vma-11) from Neurospora crassa (strain ATCC 24698 / 74-OR23-1A / CBS 708.71 / DSM 1257 / FGSC 987).